We begin with the raw amino-acid sequence, 263 residues long: LOB domain-containing protein 41 (263 aa).

The LOB domain maps to 3-109; it reads MSCNGCRVLR…VEAVMKGEPV (107 aa). The interval 162 to 204 is disordered; sequence TVAIQAESEGKSDEASHDSSLSHQSEIVAAHEGESKESESNVS. Basic and acidic residues-rich tracts occupy residues 169 to 178 and 190 to 200; these read SEGKSDEASH and AAHEGESKESE.

It belongs to the LOB domain-containing protein family. Expressed in young shoots, roots, stems, leaves and flowers.

The sequence is that of LOB domain-containing protein 41 (LBD41) from Arabidopsis thaliana (Mouse-ear cress).